Reading from the N-terminus, the 504-residue chain is Maturase K (504 aa).

It belongs to the intron maturase 2 family. MatK subfamily.

It localises to the plastid. The protein resides in the chloroplast. In terms of biological role, usually encoded in the trnK tRNA gene intron. Probably assists in splicing its own and other chloroplast group II introns. This is Maturase K from Lupinus argenteus (Silvery lupine).